The sequence spans 146 residues: Large ribosomal subunit protein uL14 (146 aa).

Belongs to the universal ribosomal protein uL14 family.

The polypeptide is Large ribosomal subunit protein uL14 (RPL23) (Encephalitozoon cuniculi (strain GB-M1) (Microsporidian parasite)).